Reading from the N-terminus, the 801-residue chain is Sucrose synthase isoform 2 (801 aa).

Residues 271–748 (MIFNVVILSP…GLKRIQEKYT (478 aa)) form a GT-B glycosyltransferase region.

This sequence belongs to the glycosyltransferase 1 family. Plant sucrose synthase subfamily. In terms of assembly, homotetramer. As to expression, exclusively expressed in flowers.

It catalyses the reaction an NDP-alpha-D-glucose + D-fructose = a ribonucleoside 5'-diphosphate + sucrose + H(+). Its function is as follows. Sucrose-cleaving enzyme that provides UDP-glucose and fructose for various metabolic pathways. The chain is Sucrose synthase isoform 2 from Daucus carota (Wild carrot).